A 456-amino-acid polypeptide reads, in one-letter code: Membrane-bound lytic murein transglycosylase F (456 aa).

Residues 1–22 (MKTWPSRAVSLLLLALALPVGC) form the signal peptide. The tract at residues 23-267 (SEPPPPVRDP…ALDETWFGRF (245 aa)) is non-LT domain. An LT domain region spans residues 268–456 (GDYDYVDVAR…YRALLAAQDL (189 aa)). Glutamate 314 is an active-site residue.

This sequence in the N-terminal section; belongs to the bacterial solute-binding protein 3 family. It in the C-terminal section; belongs to the transglycosylase Slt family.

It is found in the cell outer membrane. It catalyses the reaction Exolytic cleavage of the (1-&gt;4)-beta-glycosidic linkage between N-acetylmuramic acid (MurNAc) and N-acetylglucosamine (GlcNAc) residues in peptidoglycan, from either the reducing or the non-reducing ends of the peptidoglycan chains, with concomitant formation of a 1,6-anhydrobond in the MurNAc residue.. In terms of biological role, murein-degrading enzyme that degrades murein glycan strands and insoluble, high-molecular weight murein sacculi, with the concomitant formation of a 1,6-anhydromuramoyl product. Lytic transglycosylases (LTs) play an integral role in the metabolism of the peptidoglycan (PG) sacculus. Their lytic action creates space within the PG sacculus to allow for its expansion as well as for the insertion of various structures such as secretion systems and flagella. The sequence is that of Membrane-bound lytic murein transglycosylase F from Maricaulis maris (strain MCS10) (Caulobacter maris).